We begin with the raw amino-acid sequence, 410 residues long: Metacaspase-1B (410 aa).

Positions 1–106 (MYHRNSAPPP…SFGKGAPSNY (106 aa)) are disordered. 2 stretches are compositionally biased toward pro residues: residues 7–23 (APPP…PQSQ) and 32–52 (PPYP…PPPT). Catalysis depends on residues His-201 and Cys-257.

This sequence belongs to the peptidase C14B family.

In terms of biological role, involved in cell death (apoptosis). This is Metacaspase-1B (casB) from Aspergillus clavatus (strain ATCC 1007 / CBS 513.65 / DSM 816 / NCTC 3887 / NRRL 1 / QM 1276 / 107).